Consider the following 331-residue polypeptide: Adenine deaminase (331 aa).

Residues His-17, His-19, and His-197 each coordinate Zn(2+). The Proton donor role is filled by Glu-200. Asp-278 provides a ligand contact to Zn(2+). Asp-279 lines the substrate pocket.

This sequence belongs to the metallo-dependent hydrolases superfamily. Adenosine and AMP deaminases family. Adenine deaminase type 2 subfamily. Zn(2+) serves as cofactor.

The catalysed reaction is adenine + H2O + H(+) = hypoxanthine + NH4(+). In terms of biological role, catalyzes the hydrolytic deamination of adenine to hypoxanthine. Plays an important role in the purine salvage pathway and in nitrogen catabolism. This chain is Adenine deaminase, found in Wolinella succinogenes (strain ATCC 29543 / DSM 1740 / CCUG 13145 / JCM 31913 / LMG 7466 / NCTC 11488 / FDC 602W) (Vibrio succinogenes).